We begin with the raw amino-acid sequence, 208 residues long: Small ribosomal subunit protein uS4 (208 aa).

An S4 RNA-binding domain is found at 95–159 (TIIDNIVYRA…LKKLIGSNIE (65 aa)).

The protein belongs to the universal ribosomal protein uS4 family. Part of the 30S ribosomal subunit. Contacts protein S5. The interaction surface between S4 and S5 is involved in control of translational fidelity.

Functionally, one of the primary rRNA binding proteins, it binds directly to 16S rRNA where it nucleates assembly of the body of the 30S subunit. With S5 and S12 plays an important role in translational accuracy. The chain is Small ribosomal subunit protein uS4 from Borreliella afzelii (strain PKo) (Borrelia afzelii).